Here is a 211-residue protein sequence, read N- to C-terminus: PITH domain-containing protein GA19395 (211 aa).

In terms of domain architecture, PITH spans 20–192; it reads DHALEMGIEY…GVTICNYEAR (173 aa).

Belongs to the PITHD1 family.

This is PITH domain-containing protein GA19395 from Drosophila pseudoobscura pseudoobscura (Fruit fly).